We begin with the raw amino-acid sequence, 454 residues long: MNKLKTDLNLIWNDICLELQKVISKEAIEKWFVPIELLSIENDQLLLKAPDPIYQYWIEENYLSQLIGASFRILAKNPKIIFAQESPGNGEKATGKKIKSLPREDKSSIFESKGLNTKFSFENFVVGPNSEFAAAAAKAVAESPAKAYNPLFLYGKVGLGKTHLMQAIGNHIVEKNKWILVQYVTSEQFTNEFIEAIQKGSIGQFRKKYRQIDVLLIDDIQFLAGKERSQEEFFHTFNCLFDGSKQIVLSGDEAPSSLQNLEKRLISRFEWGLTAEILPPGIEVRLAILKHKLKNYSLSIDEKILEFIAERIKTNVRQLEGALNRLCAYASIHKEGKITLEETQSLLKDLISLQPSKTITIEMIQKRVCEAYDIRFSDMVSKRRISAIALPRMVAMYLARRLTNLSLSQIGENFGGRDHGTVLHAQRTISEKMSKDPDLAQLIKKITEQLTSSQ.

The segment at 1–76 is domain I, interacts with DnaA modulators; the sequence is MNKLKTDLNL…IGASFRILAK (76 aa). A domain II region spans residues 76-113; sequence KNPKIIFAQESPGNGEKATGKKIKSLPREDKSSIFESK. A domain III, AAA+ region region spans residues 114 to 330; it reads GLNTKFSFEN…GALNRLCAYA (217 aa). Residues G158, G160, K161, and T162 each contribute to the ATP site. The segment at 331–454 is domain IV, binds dsDNA; the sequence is SIHKEGKITL…KITEQLTSSQ (124 aa).

The protein belongs to the DnaA family. As to quaternary structure, oligomerizes as a right-handed, spiral filament on DNA at oriC.

It localises to the cytoplasm. Its function is as follows. Plays an essential role in the initiation and regulation of chromosomal replication. ATP-DnaA binds to the origin of replication (oriC) to initiate formation of the DNA replication initiation complex once per cell cycle. Binds the DnaA box (a 9 base pair repeat at the origin) and separates the double-stranded (ds)DNA. Forms a right-handed helical filament on oriC DNA; dsDNA binds to the exterior of the filament while single-stranded (ss)DNA is stabiized in the filament's interior. The ATP-DnaA-oriC complex binds and stabilizes one strand of the AT-rich DNA unwinding element (DUE), permitting loading of DNA polymerase. After initiation quickly degrades to an ADP-DnaA complex that is not apt for DNA replication. Binds acidic phospholipids. In Methylacidiphilum infernorum (isolate V4) (Methylokorus infernorum (strain V4)), this protein is Chromosomal replication initiator protein DnaA.